Consider the following 458-residue polypeptide: Bifunctional protein GlmU (458 aa).

Residues 1–230 (MHKRTAVVLA…EREILGINSR (230 aa)) form a pyrophosphorylase region. UDP-N-acetyl-alpha-D-glucosamine contacts are provided by residues 9–12 (LAAG), K23, Q73, and 78–79 (GT). Residue D103 participates in Mg(2+) binding. UDP-N-acetyl-alpha-D-glucosamine contacts are provided by G140, E155, N170, and N228. A Mg(2+)-binding site is contributed by N228. The interval 231–251 (VQLAEAEAVLQDRLRRKWMDA) is linker. An N-acetyltransferase region spans residues 252 to 458 (GVTLIDPPSV…FLGRKHKGSQ (207 aa)). The UDP-N-acetyl-alpha-D-glucosamine site is built by R333 and K351. H363 serves as the catalytic Proton acceptor. 2 residues coordinate UDP-N-acetyl-alpha-D-glucosamine: Y366 and N377. Residues A380, 386-387 (NY), S405, A423, and R440 contribute to the acetyl-CoA site.

This sequence in the N-terminal section; belongs to the N-acetylglucosamine-1-phosphate uridyltransferase family. It in the C-terminal section; belongs to the transferase hexapeptide repeat family. In terms of assembly, homotrimer. The cofactor is Mg(2+).

Its subcellular location is the cytoplasm. It catalyses the reaction alpha-D-glucosamine 1-phosphate + acetyl-CoA = N-acetyl-alpha-D-glucosamine 1-phosphate + CoA + H(+). It carries out the reaction N-acetyl-alpha-D-glucosamine 1-phosphate + UTP + H(+) = UDP-N-acetyl-alpha-D-glucosamine + diphosphate. It functions in the pathway nucleotide-sugar biosynthesis; UDP-N-acetyl-alpha-D-glucosamine biosynthesis; N-acetyl-alpha-D-glucosamine 1-phosphate from alpha-D-glucosamine 6-phosphate (route II): step 2/2. It participates in nucleotide-sugar biosynthesis; UDP-N-acetyl-alpha-D-glucosamine biosynthesis; UDP-N-acetyl-alpha-D-glucosamine from N-acetyl-alpha-D-glucosamine 1-phosphate: step 1/1. The protein operates within bacterial outer membrane biogenesis; LPS lipid A biosynthesis. Functionally, catalyzes the last two sequential reactions in the de novo biosynthetic pathway for UDP-N-acetylglucosamine (UDP-GlcNAc). The C-terminal domain catalyzes the transfer of acetyl group from acetyl coenzyme A to glucosamine-1-phosphate (GlcN-1-P) to produce N-acetylglucosamine-1-phosphate (GlcNAc-1-P), which is converted into UDP-GlcNAc by the transfer of uridine 5-monophosphate (from uridine 5-triphosphate), a reaction catalyzed by the N-terminal domain. This Heliobacterium modesticaldum (strain ATCC 51547 / Ice1) protein is Bifunctional protein GlmU.